The primary structure comprises 145 residues: Protein AggB (145 aa).

An N-terminal signal peptide occupies residues 1-24; sequence MLKKSILPMSCGVLVMVMSGLLDA.

To E.coli AfaD.

This chain is Protein AggB (aggB), found in Escherichia coli.